Consider the following 316-residue polypeptide: CD276 antigen (316 aa).

The N-terminal stretch at 1 to 28 is a signal peptide; sequence MLRGWGGPSVGVCVRTALGVLCLCLTGA. In terms of domain architecture, Ig-like V-type spans 29–139; that stretch reads VEVQVSEDPV…DSAAVSLQVA (111 aa). At 29-248 the chain is on the extracellular side; it reads VEVQVSEDPV…GQPLTFPPEA (220 aa). N-linked (GlcNAc...) asparagine glycans are attached at residues Asn-104, Asn-189, and Asn-215. The Ig-like C2-type domain maps to 145 to 238; sequence PSMTLEPNKD…QDAHGSVTIT (94 aa). Cys-165 and Cys-220 are disulfide-bonded. Residues 249-269 form a helical membrane-spanning segment; that stretch reads LWVTVGLSVCLVVLLVALAFV. The Cytoplasmic portion of the chain corresponds to 270–316; the sequence is CWRKIKQSCEEENAGAEDQDGDGEGSKTALRPLKPSENKEDDGQEIA. Positions 280 to 292 are enriched in acidic residues; sequence EENAGAEDQDGDG. The segment at 280–316 is disordered; that stretch reads EENAGAEDQDGDGEGSKTALRPLKPSENKEDDGQEIA.

Belongs to the immunoglobulin superfamily. BTN/MOG family. In terms of assembly, interacts with TREML2 and this interaction enhances T-cell activation. Ubiquitous.

It is found in the membrane. Its function is as follows. Modulates T-cell-mediated immune responses and the development of acute and chronic transplant rejection. Plays a positive regulatory role in bone formation and has a dual role in the bone-immune interface. Induces antitumor immunity as it activates both acquired and innate immunity leading to natural killer cell and CD8 T-cell dependent killing of tumor cells. This is CD276 antigen (Cd276) from Mus musculus (Mouse).